A 345-amino-acid polypeptide reads, in one-letter code: Holliday junction branch migration complex subunit RuvB (345 aa).

The tract at residues 1–186 is large ATPase domain (RuvB-L); the sequence is MSTDPDEREV…FGFTAHMDFY (186 aa). ATP-binding positions include L25, R26, G67, K70, T71, S72, 133–135, R176, Y186, and R223; that span reads EDF. T71 is a Mg(2+) binding site. The small ATPAse domain (RuvB-S) stretch occupies residues 187–257; it reads EPAELERVLV…VAKAALAVYD (71 aa). Residues 260–345 are head domain (RuvB-H); sequence ELGLDRLDRA…AGANQPGLFE (86 aa). The DNA site is built by R315 and R320.

The protein belongs to the RuvB family. In terms of assembly, homohexamer. Forms an RuvA(8)-RuvB(12)-Holliday junction (HJ) complex. HJ DNA is sandwiched between 2 RuvA tetramers; dsDNA enters through RuvA and exits via RuvB. An RuvB hexamer assembles on each DNA strand where it exits the tetramer. Each RuvB hexamer is contacted by two RuvA subunits (via domain III) on 2 adjacent RuvB subunits; this complex drives branch migration. In the full resolvosome a probable DNA-RuvA(4)-RuvB(12)-RuvC(2) complex forms which resolves the HJ.

It is found in the cytoplasm. The enzyme catalyses ATP + H2O = ADP + phosphate + H(+). Functionally, the RuvA-RuvB-RuvC complex processes Holliday junction (HJ) DNA during genetic recombination and DNA repair, while the RuvA-RuvB complex plays an important role in the rescue of blocked DNA replication forks via replication fork reversal (RFR). RuvA specifically binds to HJ cruciform DNA, conferring on it an open structure. The RuvB hexamer acts as an ATP-dependent pump, pulling dsDNA into and through the RuvAB complex. RuvB forms 2 homohexamers on either side of HJ DNA bound by 1 or 2 RuvA tetramers; 4 subunits per hexamer contact DNA at a time. Coordinated motions by a converter formed by DNA-disengaged RuvB subunits stimulates ATP hydrolysis and nucleotide exchange. Immobilization of the converter enables RuvB to convert the ATP-contained energy into a lever motion, pulling 2 nucleotides of DNA out of the RuvA tetramer per ATP hydrolyzed, thus driving DNA branch migration. The RuvB motors rotate together with the DNA substrate, which together with the progressing nucleotide cycle form the mechanistic basis for DNA recombination by continuous HJ branch migration. Branch migration allows RuvC to scan DNA until it finds its consensus sequence, where it cleaves and resolves cruciform DNA. The sequence is that of Holliday junction branch migration complex subunit RuvB from Mycobacterium ulcerans (strain Agy99).